The sequence spans 1976 residues: Putative callose synthase 8 (1976 aa).

At 1-530 (MSHEIVPVDP…FWQIFRSFDR (530 aa)) the chain is on the cytoplasmic side. A helical membrane pass occupies residues 531-551 (MWSFFVLSLQALIIMACHDVG). Residues 552 to 565 (SPLQVFNANIFEDV) lie on the Extracellular side of the membrane. The helical transmembrane segment at 566–586 (MSIFITSAILKLIKGILDIIF) threads the bilayer. Over 587 to 602 (KWKARNTMPINEKKKR) the chain is Cytoplasmic. The helical transmembrane segment at 603–623 (LVKLGFAAMWTIILPVLYSHS) threads the bilayer. The Extracellular segment spans residues 624–648 (RRKYICYFTNYKTWLGEWCFSPYMV). A helical transmembrane segment spans residues 649 to 669 (AVTIYLTGSAIELVLFFVPAI). Residues 670–707 (SKYIETSNHGIFKTLSWWGQPRLYVGRGMQETQVSQFK) are Cytoplasmic-facing. Residues 708-728 (YTFFWILVLLTKFAFSYAFEI) traverse the membrane as a helical segment. Residues 729–759 (KPLIEPTRLIMKVGVRNYEWHEIFPEVKSNA) lie on the Extracellular side of the membrane. The helical transmembrane segment at 760 to 780 (AAIVAVWAPIMVVYFMDTQIW) threads the bilayer. Over 781–1544 (YSVYCTIFGG…FDFFRMLSCY (764 aa)) the chain is Cytoplasmic. The chain crosses the membrane as a helical span at residues 1545 to 1565 (FTTIGFYFSSLISVIGIYIYL). At 1566-1595 (YGQLYLVLSGLQKTLILEAKVKNIKSLETA) the chain is on the extracellular side. A helical transmembrane segment spans residues 1596–1616 (LASQSFIQLGLLTGLPMVMEI). Over 1617-1620 (GLEK) the chain is Cytoplasmic. A helical membrane pass occupies residues 1621–1641 (GFLIAFQDFILMQLQLAAFFF). At 1642–1688 (TFSLGTKTHYFGRTILHGGAKYRPTGRKVVVFHANFSENYRLYSRSH) the chain is on the extracellular side. N-linked (GlcNAc...) asparagine glycosylation occurs at asparagine 1676. The helical transmembrane segment at 1689–1709 (FIKGFELMILLVVYELFKHTS) threads the bilayer. At 1710 to 1715 (QSNMAY) the chain is on the cytoplasmic side. Residues 1716–1736 (SFITFSVWFMSFTWLCAPFLF) form a helical membrane-spanning segment. At 1737–1790 (NPSGFTWEIIVGDWRDWNRWIKEQGGIGIQQDKSWQSWWNDEQAHLRGSGVGAR) the chain is on the extracellular side. Residues 1791–1811 (CLEIILSLRFFVYQYGLVYHL) form a helical membrane-spanning segment. At 1812 to 1819 (DITQSNTN) the chain is on the cytoplasmic side. A helical transmembrane segment spans residues 1820 to 1840 (IIVYALSWVVILATFFTVKAV). Residues 1841-1856 (DLGRQLFSTRKHLVFR) are Extracellular-facing. Residues 1857–1877 (FFKVFVFVSILTIIITLANIC) form a helical membrane-spanning segment. Residues 1878–1884 (HLSVKDL) are Cytoplasmic-facing. The helical transmembrane segment at 1885 to 1905 (LVSCLAFLPTGWGLILIAQAV) threads the bilayer. Residues 1906–1928 (RPKIEGTSLWEFTQVLARAYDYG) are Extracellular-facing. Residues 1929–1949 (MGVVLFAPMAILAWLPIISAF) traverse the membrane as a helical segment. The Cytoplasmic portion of the chain corresponds to 1950–1976 (QTRFLFNEAFNRRLQIQPILAGKKKNR).

The protein belongs to the glycosyltransferase 48 family.

Its subcellular location is the cell membrane. The enzyme catalyses [(1-&gt;3)-beta-D-glucosyl](n) + UDP-alpha-D-glucose = [(1-&gt;3)-beta-D-glucosyl](n+1) + UDP + H(+). Functionally, involved in callose synthesis at the forming cell plate during cytokinesis. During plant growth and development, callose is found as a transitory component of the cell plate in dividing cells, is a major component of pollen mother cell walls and pollen tubes, and is found as a structural component of plasmodesmatal canals. The protein is Putative callose synthase 8 (CALS8) of Arabidopsis thaliana (Mouse-ear cress).